The primary structure comprises 264 residues: MSKVTTSTLMKFKQEGKKFTALTAYDASFAAAFDSEGVDVLLVGDSLGMVLQGHEDTLPVTVQDIAYHTRCVRRGISRALLIADLPFMSYATVEQTMTTATALMQAGANMVKLEGGEWLLESVKKLTERGVPVCAHIGLTPQSVHVFGGFKVQGRDADNAQRILNEAKALEAAGAQLLVIECIPASLAKAITEALSIPVIGIGAGKDTDGQILVMHDVLGISSGYIPRFSKNYLKQTGEIRAAVRAFIDEVADGSFPGPEHTFN.

Residues D45 and D84 each contribute to the Mg(2+) site. 3-methyl-2-oxobutanoate contacts are provided by residues 45 to 46 (DS), D84, and K112. E114 contacts Mg(2+). The active-site Proton acceptor is E181.

Belongs to the PanB family. In terms of assembly, homodecamer; pentamer of dimers. Requires Mg(2+) as cofactor.

It localises to the cytoplasm. It carries out the reaction 3-methyl-2-oxobutanoate + (6R)-5,10-methylene-5,6,7,8-tetrahydrofolate + H2O = 2-dehydropantoate + (6S)-5,6,7,8-tetrahydrofolate. The protein operates within cofactor biosynthesis; (R)-pantothenate biosynthesis; (R)-pantoate from 3-methyl-2-oxobutanoate: step 1/2. Its function is as follows. Catalyzes the reversible reaction in which hydroxymethyl group from 5,10-methylenetetrahydrofolate is transferred onto alpha-ketoisovalerate to form ketopantoate. This Shewanella amazonensis (strain ATCC BAA-1098 / SB2B) protein is 3-methyl-2-oxobutanoate hydroxymethyltransferase.